Here is a 387-residue protein sequence, read N- to C-terminus: UDP-N-acetylglucosamine--N-acetylmuramyl-(pentapeptide) pyrophosphoryl-undecaprenol N-acetylglucosamine transferase (387 aa).

UDP-N-acetyl-alpha-D-glucosamine-binding positions include 23–25, Asn-135, Arg-174, Ser-203, Ile-261, 280–285, and Gln-306; these read TGG and ALTVSE.

It belongs to the glycosyltransferase 28 family. MurG subfamily.

The protein resides in the cell inner membrane. It carries out the reaction di-trans,octa-cis-undecaprenyl diphospho-N-acetyl-alpha-D-muramoyl-L-alanyl-D-glutamyl-meso-2,6-diaminopimeloyl-D-alanyl-D-alanine + UDP-N-acetyl-alpha-D-glucosamine = di-trans,octa-cis-undecaprenyl diphospho-[N-acetyl-alpha-D-glucosaminyl-(1-&gt;4)]-N-acetyl-alpha-D-muramoyl-L-alanyl-D-glutamyl-meso-2,6-diaminopimeloyl-D-alanyl-D-alanine + UDP + H(+). The protein operates within cell wall biogenesis; peptidoglycan biosynthesis. Functionally, cell wall formation. Catalyzes the transfer of a GlcNAc subunit on undecaprenyl-pyrophosphoryl-MurNAc-pentapeptide (lipid intermediate I) to form undecaprenyl-pyrophosphoryl-MurNAc-(pentapeptide)GlcNAc (lipid intermediate II). The sequence is that of UDP-N-acetylglucosamine--N-acetylmuramyl-(pentapeptide) pyrophosphoryl-undecaprenol N-acetylglucosamine transferase from Colwellia psychrerythraea (strain 34H / ATCC BAA-681) (Vibrio psychroerythus).